The primary structure comprises 338 residues: N-acetyl-gamma-glutamyl-phosphate reductase (338 aa).

Cysteine 148 is an active-site residue.

Belongs to the NAGSA dehydrogenase family. Type 1 subfamily.

The protein localises to the cytoplasm. The catalysed reaction is N-acetyl-L-glutamate 5-semialdehyde + phosphate + NADP(+) = N-acetyl-L-glutamyl 5-phosphate + NADPH + H(+). It participates in amino-acid biosynthesis; L-arginine biosynthesis; N(2)-acetyl-L-ornithine from L-glutamate: step 3/4. In terms of biological role, catalyzes the NADPH-dependent reduction of N-acetyl-5-glutamyl phosphate to yield N-acetyl-L-glutamate 5-semialdehyde. The protein is N-acetyl-gamma-glutamyl-phosphate reductase of Leptospira interrogans serogroup Icterohaemorrhagiae serovar copenhageni (strain Fiocruz L1-130).